The following is a 445-amino-acid chain: MIRIEDIISLAKRKGFVFQSSEVYGGLSGVWDYGPLGIELKQNIQKEWWKNMVYSHENVVGLDSSILMRSEVWTASGHVESFAELLVDCKNCKNRFKIDSIDFSKGCPNCNSMGTFTDPRSFDLMFKTNIGAVEDSSNEIYLRPETAQGIFVNFRNVLDSTRLKVPFGIAQVGKAFRNEIVAKNFIFRTCEFEQMEMQFFVHPNQMDDWYYYWQQKRLNFFIEILGIKSDNLRFKEHKGDELAHYAKAAIDIEYKFPFGFQEIEGIHNRGNYDLSQHAKFCGKPKLFEYHDLISGDRYIPYVIETSLGLTRSVLMTLCDAYAHEELEGGDKRIVLRLHPKIAPYKVAILPLVKKDGLPELARKVFMQFSDDFYMFYDDNGTIGKRYRRQDEIGTPYCVTVDYDSIENKTVTLRHRDTMTQVRIPINDLYSYVRTEILNYKGVSDR.

2 residues coordinate substrate: Lys97 and Glu145. ATP is bound by residues 177–179, 187–192, 262–263, and 308–311; these read RNE, FRTCEF, EI, and GLTR. 192–196 serves as a coordination point for substrate; it reads FEQME. 304-308 lines the substrate pocket; it reads ETSLG.

It belongs to the class-II aminoacyl-tRNA synthetase family. In terms of assembly, homodimer.

The protein localises to the cytoplasm. It catalyses the reaction tRNA(Gly) + glycine + ATP = glycyl-tRNA(Gly) + AMP + diphosphate. In terms of biological role, catalyzes the attachment of glycine to tRNA(Gly). This Borrelia hermsii (strain HS1 / DAH) protein is Glycine--tRNA ligase.